Reading from the N-terminus, the 220-residue chain is MHNYLDNIMPDFSIENEILKLKNNKECIIVGVDEVGYGSLAGPVVSAAVFFPNYNNETTQDINDSKKLTPKTRQKIYNKIITRVKWSIGFAHIFEIDEYNILNATHIAMKRALTGLNAHIDIDYVIIDGNKIPNIPWNAQAIIGGDTISTSIAAASIIAKVTRDRLMETLHIQYPQYNWNKNKGYGTKDHITSLYKYGKTIHHRNTFTPISKISYMFKNS.

One can recognise an RNase H type-2 domain in the interval 27-220 (CIIVGVDEVG…SKISYMFKNS (194 aa)). Residues aspartate 33, glutamate 34, and aspartate 128 each contribute to the a divalent metal cation site.

This sequence belongs to the RNase HII family. The cofactor is Mn(2+). Mg(2+) serves as cofactor.

It is found in the cytoplasm. It catalyses the reaction Endonucleolytic cleavage to 5'-phosphomonoester.. Functionally, endonuclease that specifically degrades the RNA of RNA-DNA hybrids. The chain is Ribonuclease HII from Ehrlichia ruminantium (strain Gardel).